The sequence spans 336 residues: Small ribosomal subunit protein uS9m (336 aa).

Positions 32-81 (STTTTTTTTTTTTTSDEIPTTKPRFQSRFRRNQQPHQQQRSPYTSSQVTE) are disordered. Residues 33-45 (TTTTTTTTTTTTT) show a composition bias toward low complexity. A compositionally biased stretch (polar residues) spans 65 to 81 (QPHQQQRSPYTSSQVTE).

It belongs to the universal ribosomal protein uS9 family. Component of the mitochondrial small ribosomal subunit (mt-SSU).

The protein resides in the mitochondrion. Component of the mitochondrial ribosome (mitoribosome), a dedicated translation machinery responsible for the synthesis of mitochondrial genome-encoded proteins, including at least some of the essential transmembrane subunits of the mitochondrial respiratory chain. The mitoribosomes are attached to the mitochondrial inner membrane and translation products are cotranslationally integrated into the membrane. This Candida albicans (strain SC5314 / ATCC MYA-2876) (Yeast) protein is Small ribosomal subunit protein uS9m (MRPS9).